The primary structure comprises 497 residues: Vacuolar-processing enzyme (497 aa).

Positions 1–31 (METHKSLLFFTNYVLFLVFTLSFLPIPGLLA) are cleaved as a signal peptide. The active site involves H180. The active-site Nucleophile is the C222. The cysteines at positions 255 and 269 are disulfide-linked. N320 and N374 each carry an N-linked (GlcNAc...) asparagine glycan. Cystine bridges form between C433-C463 and C445-C480.

Belongs to the peptidase C13 family.

Functionally, asparagine-specific endopeptidase involved in the processing of vacuolar seed protein precursors into the mature forms. The sequence is that of Vacuolar-processing enzyme from Ricinus communis (Castor bean).